The chain runs to 1563 residues: Galactose-specific cell agglutination protein gsf2 (1563 aa).

Residues 1–27 form the signal peptide; sequence MSVRRFLSTSARALLFTAALLPSLTSG. 29 tandem repeats follow at residues 203–280, 281–358, 359–436, 437–514, 515–592, 593–670, 671–750, 751–825, 826–869, 870–913, 914–957, 958–1001, 1002–1045, 1046–1089, 1090–1133, 1134–1140, 1141–1162, 1163–1184, 1185–1200, 1201–1221, 1223–1244, 1245–1266, 1267–1282, 1283–1304, 1305–1326, 1327–1348, 1349–1364, 1365–1386, and 1387–1397. The tract at residues 203–825 is 8 X 78 AA approximate tandem repeats; it reads TTTTTVGYPG…IPTGTTGTTT (623 aa). 12 N-linked (GlcNAc...) asparagine glycosylation sites follow: N224, N263, N302, N341, N380, N419, N458, N497, N536, N575, N614, and N653. A glycan (N-linked (GlcNAc...) asparagine) is linked at N784. The segment at 826-1140 is 8 X 44 AA approximate tandem repeats; sequence VVIQTPTTVT…TTTVVINTPT (315 aa). The interval 1135–1393 is disordered; that stretch reads VINTPTTTGS…TQVTTATEVQ (259 aa). A 13 X 22 AA approximate tandem repeats region spans residues 1141 to 1397; that stretch reads TTGSEVLPTT…TATEVQPTTA (257 aa). Residues N1510, N1516, N1529, and N1532 are each glycosylated (N-linked (GlcNAc...) asparagine). S1539 is lipidated: GPI-anchor amidated serine. A propeptide spans 1540–1563 (removed in mature form); the sequence is SAGANKPIAYLTFVSLFVYIVTLI.

The protein belongs to the mam3/map4 family.

It localises to the cell membrane. Functionally, galactose-specific adhesion protein essential for non-sexual flocculation and filamentous growth. Required for adhesion and filamentous growth through recognition of galactose residues on cell surface glycoconjugates. Induces flocculation when overexpressed. This chain is Galactose-specific cell agglutination protein gsf2, found in Schizosaccharomyces pombe (strain 972 / ATCC 24843) (Fission yeast).